The following is a 489-amino-acid chain: COX3 mRNA-specific translational activator PET494 (489 aa).

The protein resides in the mitochondrion inner membrane. Functionally, required for the expression of the mitochondrial gene for cytochrome c oxidase subunit III (COX3). The protein is COX3 mRNA-specific translational activator PET494 (PET494) of Saccharomyces cerevisiae (strain ATCC 204508 / S288c) (Baker's yeast).